We begin with the raw amino-acid sequence, 292 residues long: tRNA pseudouridine synthase B (292 aa).

Residue Asp40 is the Nucleophile of the active site.

Belongs to the pseudouridine synthase TruB family. Type 1 subfamily.

The catalysed reaction is uridine(55) in tRNA = pseudouridine(55) in tRNA. In terms of biological role, responsible for synthesis of pseudouridine from uracil-55 in the psi GC loop of transfer RNAs. This is tRNA pseudouridine synthase B from Mycoplasma mycoides subsp. mycoides SC (strain CCUG 32753 / NCTC 10114 / PG1).